A 402-amino-acid chain; its full sequence is Bisdemethoxycurcumin synthase (402 aa).

Cys174 (acyl-thioester intermediate) is an active-site residue.

This sequence belongs to the thiolase-like superfamily. Chalcone/stilbene synthases family. Homodimer.

The catalysed reaction is 2 4-coumaroyl-CoA + malonyl-CoA + H2O + H(+) = bisdemethoxycurcumin + 2 CO2 + 3 CoA. Its pathway is secondary metabolite biosynthesis; flavonoid biosynthesis. Its function is as follows. Plant-specific type III polyketide synthase (PKS) that catalyzes the one-pot formation of the C6-C7-C6 diarylheptanoid scaffold of bisdemethoxycurcumin by the condensation of two molecules of 4-coumaroyl-CoA and one molecule of malonyl-CoA. This is Bisdemethoxycurcumin synthase from Oryza sativa subsp. japonica (Rice).